The sequence spans 195 residues: Rho-related protein racB (195 aa).

Position 10-17 (10-17 (GDGAVGKT)) interacts with GTP. The Effector region motif lies at 32–40 (YVPTVFDNY). Residues 57 to 61 (DTAGQ) and 115 to 118 (TKCD) contribute to the GTP site. Cysteine methyl ester is present on Cys192. The S-geranylgeranyl cysteine moiety is linked to residue Cys192. Residues 193–195 (SIL) constitute a propeptide, removed in mature form.

Belongs to the small GTPase superfamily. Rho family. In terms of assembly, interacts with pakB.

The protein resides in the cell membrane. The chain is Rho-related protein racB (racB) from Dictyostelium discoideum (Social amoeba).